The chain runs to 692 residues: Potassium-transporting ATPase ATP-binding subunit (692 aa).

4 consecutive transmembrane segments (helical) span residues 35–55, 64–84, 213–233, and 254–274; these read VMFI…KDLY, LQIS…EAIA, IALT…VMSL, and ILIS…LSAI. The active-site 4-aspartylphosphate intermediate is Asp307. ATP contacts are provided by residues Asp344, Glu348, 377–384, and Lys400; that span reads FSASTKMS. Asp523 and Asp527 together coordinate Mg(2+). 3 helical membrane passes run 592–612, 626–646, and 672–692; these read YFAI…VGPL, AVLS…PLAL, and MVIP…LGII.

This sequence belongs to the cation transport ATPase (P-type) (TC 3.A.3) family. Type IA subfamily. In terms of assembly, the system is composed of three essential subunits: KdpA, KdpB and KdpC.

It is found in the cell inner membrane. It catalyses the reaction K(+)(out) + ATP + H2O = K(+)(in) + ADP + phosphate + H(+). Functionally, part of the high-affinity ATP-driven potassium transport (or Kdp) system, which catalyzes the hydrolysis of ATP coupled with the electrogenic transport of potassium into the cytoplasm. This subunit is responsible for energy coupling to the transport system and for the release of the potassium ions to the cytoplasm. This is Potassium-transporting ATPase ATP-binding subunit from Leptospira interrogans serogroup Icterohaemorrhagiae serovar Lai (strain 56601).